The following is a 133-amino-acid chain: Phosphoribosyl-AMP cyclohydrolase (133 aa).

Asp77 provides a ligand contact to Mg(2+). Cys78 contributes to the Zn(2+) binding site. 2 residues coordinate Mg(2+): Asp79 and Asp81. Positions 95 and 102 each coordinate Zn(2+).

This sequence belongs to the PRA-CH family. As to quaternary structure, homodimer. The cofactor is Mg(2+). Requires Zn(2+) as cofactor.

The protein resides in the cytoplasm. The enzyme catalyses 1-(5-phospho-beta-D-ribosyl)-5'-AMP + H2O = 1-(5-phospho-beta-D-ribosyl)-5-[(5-phospho-beta-D-ribosylamino)methylideneamino]imidazole-4-carboxamide. Its pathway is amino-acid biosynthesis; L-histidine biosynthesis; L-histidine from 5-phospho-alpha-D-ribose 1-diphosphate: step 3/9. Catalyzes the hydrolysis of the adenine ring of phosphoribosyl-AMP. The sequence is that of Phosphoribosyl-AMP cyclohydrolase from Azotobacter chroococcum mcd 1.